The following is a 416-amino-acid chain: Thyroid hormone receptor alpha (416 aa).

Positions 1-13 (MEPMSNKQDSNSS) are enriched in polar residues. The interval 1 to 37 (MEPMSNKQDSNSSEGDEKGWPDVPKRKRKNSQCSMKS) is disordered. The tract at residues 1–58 (MEPMSNKQDSNSSEGDEKGWPDVPKRKRKNSQCSMKSMSALSVSVPGYIPSYLEKDEP) is modulating. Residues 15–24 (GDEKGWPDVP) are compositionally biased toward basic and acidic residues. Zn(2+)-binding residues include Cys-59, Cys-62, Cys-76, Cys-79, Cys-97, Cys-103, Cys-113, and Cys-116. NR C4-type zinc fingers lie at residues 59-79 (CVVCGDKATGYHYRCITCEGC) and 97-121 (CKYEGCCIIDKITRNQCQLCRFKKC). Residues 59–133 (CVVCGDKATG…VGMAMDLVLD (75 aa)) constitute a DNA-binding region (nuclear receptor). Residues 169–413 (AEWELIRMAT…PPLFLEVFED (245 aa)) enclose the NR LBD domain. Arg-234 contacts 3,3',5-triiodo-L-thyronine.

This sequence belongs to the nuclear hormone receptor family. NR1 subfamily.

It localises to the nucleus. In terms of biological role, nuclear hormone receptor that can act as a repressor or activator of transcription. High affinity receptor for thyroid hormones, including triiodothyronine and thyroxine. This is Thyroid hormone receptor alpha (thra) from Hippoglossus hippoglossus (Atlantic halibut).